An 864-amino-acid chain; its full sequence is MPPTALPPLRPPAQPYDSYSSSLSPSSPRFHPASAPHGRRAPSPSRLESLLDAPHAPARSPSRKIRSALSRHIRPHLTPRTLTPLLLWTLALWLVHHFLFPFSSPLAALSRPKAEQHFLSTTFPPPPQRLGDDRLDSVDPRWRAFHPLPPPEPPFPRLRPTRFLPPQCLEQWFADGETLCGAKEMGEEETLDATWLWVNGSDHRWRDSMAEWREKENVNSPERHFREQNELVHSMRSVLDALPGHLRTFHLILADYPFNYPEDLDLVPPSIIPDLEVAASKGGQGRRHPRELARAPASVSNLTERLTPESISPSLARHLQSEWRILQTPTWLDFSRRDPSDPSHPFHPYSVSKAGEMRQHYAEASYPTLRYASHWEVFHIPSVDRDGREELMGEREWRENEWKKKALPSFNSMAIESRIGWLPGLADAIIALNDDFFLLRPHAVSDFHSPLYGSVIRFEHSYNQQVKPDVEKNHINDPGEMGGLYHANALLSRRFPHRLRPYFAHVPKVITRGLHHEASLMFQEALTLSSTRKFREMKIGEGDVQMQWLLTSLRVERWREALLWTWVVANMGTLSGSHDRWDSDTRSAIKHLFGFTEDDDDVVKIEVHRGERWTLEPGRMQKVFHQAGWEAPKATEFLFSSMDGIMPPLLRSGEDPSQNDRCIIDLNRCFGVFWTRQEDVLSADMMKRLTFQYPECGDCMIMALVTASGTLGLNAFFPPKETTITAPELGPGDAYPKYLPPPHLPLTPTWHEADYSLSNILSTTALPGEQVDIRQYCMRLLSRYLYLDAKSVSHFHMMKSAEHAKRVFKMIQDNPKVSILGMNDDIESDYDEVKRLMNEWFEMRWPRKAVWERDWDPVKDRYHD.

The segment covering 1–14 has biased composition (pro residues); it reads MPPTALPPLRPPAQ. The disordered stretch occupies residues 1–47; that stretch reads MPPTALPPLRPPAQPYDSYSSSLSPSSPRFHPASAPHGRRAPSPSRL. Residues 1–81 lie on the Cytoplasmic side of the membrane; the sequence is MPPTALPPLR…HIRPHLTPRT (81 aa). Low complexity predominate over residues 15 to 28; it reads PYDSYSSSLSPSSP. The chain crosses the membrane as a helical span at residues 82–102; that stretch reads LTPLLLWTLALWLVHHFLFPF. The Lumenal segment spans residues 103–864; the sequence is SSPLAALSRP…WDPVKDRYHD (762 aa). 2 N-linked (GlcNAc...) asparagine glycosylation sites follow: asparagine 199 and asparagine 301.

Belongs to the XPT1 family. Mn(2+) serves as cofactor.

It localises to the golgi apparatus membrane. It catalyses the reaction 3-alpha-D-mannopyranosyl-alpha-D-mannopyranose + UDP-alpha-D-xylose = 3-O-(6-O-alpha-D-xylosylphospho-alpha-D-mannopyranosyl)-alpha-D-mannopyranose + UMP + H(+). Xylosylphosphotransferase that is specific for UDP-xylose as a donor and mannose as an acceptor to form a xylose-alpha-1-phosphate-6-mannose linkage. Functions in the O-glycosylation of proteins en route through the secretory pathway. This Cryptococcus neoformans var. neoformans serotype D (strain B-3501A) (Filobasidiella neoformans) protein is 3-O-alpha-D-mannopyranosyl-alpha-D-mannopyranose xylosylphosphotransferase (XPT1).